The following is a 702-amino-acid chain: Pseudouridylate synthase PUS7L (702 aa).

Ser79 carries the post-translational modification Phosphoserine. Residues 84–116 (NSEGAADLPGCSDGDRSHQSDSEKENSVNSVTS) form a disordered region. Positions 96 to 109 (DGDRSHQSDSEKEN) are enriched in basic and acidic residues. The Nucleophile role is filled by Asp339. Residues 424–646 (GFVNYYGPQR…PGCYRHIVKH (223 aa)) enclose the TRUD domain.

This sequence belongs to the pseudouridine synthase TruD family.

The enzyme catalyses a uridine in mRNA = a pseudouridine in mRNA. Functionally, pseudouridine synthase that catalyzes pseudouridylation of mRNAs. The chain is Pseudouridylate synthase PUS7L from Mus musculus (Mouse).